The sequence spans 245 residues: 1-(5-phosphoribosyl)-5-[(5-phosphoribosylamino)methylideneamino] imidazole-4-carboxamide isomerase (245 aa).

The Proton acceptor role is filled by Asp11. Residue Asp132 is the Proton donor of the active site.

Belongs to the HisA/HisF family.

The protein resides in the cytoplasm. The catalysed reaction is 1-(5-phospho-beta-D-ribosyl)-5-[(5-phospho-beta-D-ribosylamino)methylideneamino]imidazole-4-carboxamide = 5-[(5-phospho-1-deoxy-D-ribulos-1-ylimino)methylamino]-1-(5-phospho-beta-D-ribosyl)imidazole-4-carboxamide. Its pathway is amino-acid biosynthesis; L-histidine biosynthesis; L-histidine from 5-phospho-alpha-D-ribose 1-diphosphate: step 4/9. This is 1-(5-phosphoribosyl)-5-[(5-phosphoribosylamino)methylideneamino] imidazole-4-carboxamide isomerase from Geobacillus thermodenitrificans (strain NG80-2).